The chain runs to 616 residues: Protein NRT1/ PTR FAMILY 2.11 (616 aa).

Positions 1-22 (MERKPLELESTDNHQNPSSAVY) are disordered. Transmembrane regions (helical) follow at residues 59 to 79 (FEKL…TAVF), 87 to 107 (ATII…AAFL), 118 to 138 (LSVA…TAAV), 159 to 179 (GGQI…AGGI), 205 to 225 (FFNW…TLVV), 233 to 253 (WTIG…IFFA), 349 to 369 (VKCI…YLTI), 392 to 412 (FVIP…VFIV), 435 to 455 (LQRI…AGFV), 483 to 503 (AMWL…AAIG), 519 to 539 (FAGS…SFLI), and 566 to 586 (LFYF…LVMS).

The protein belongs to the major facilitator superfamily. Proton-dependent oligopeptide transporter (POT/PTR) (TC 2.A.17) family. Expressed in roots. Detected in shoots, stems and flowers. Expressed in veins and in the root vasculature with highest expression in lateral branching points.

The protein localises to the cell membrane. High-affinity, proton-dependent glucosinolate-specific transporter. Involved in apoplasmic phloem-loading of glucosinolates and in bidirectional long-distance transport of aliphatic but not indole glucosinolates. May be involved in removal of glucosinolates from the xylem in roots. This is Protein NRT1/ PTR FAMILY 2.11 (NPF2.11) from Arabidopsis thaliana (Mouse-ear cress).